We begin with the raw amino-acid sequence, 448 residues long: Death-associated protein kinase 3 (448 aa).

The region spanning 13 to 275 (YEMGEELGSG…IAQSLEHSWI (263 aa)) is the Protein kinase domain. ATP is bound by residues 19 to 27 (LGSGQFAIV) and K42. D139 functions as the Proton acceptor in the catalytic mechanism. Residues 161 to 204 (DFGIAHRIEAGSEFKNIFGTPEFVAPEIVNYEPLGLEADMWSIG) are activation segment. T180 and T225 each carry phosphothreonine. Position 265 is a phosphothreonine; by autocatalysis (T265). Residue T265 is modified to Phosphothreonine; by ROCK1. At S304 the chain carries Phosphoserine; by DAPK1. Phosphoserine; by autocatalysis and DAPK1 is present on S306. A phosphoserine; by DAPK1 mark is found at S307, S313, and S321. Positions 390–448 (AQEEARAALLGAGGLKRRLCRLENRYDALAAQVAAEVQFVRDLVRALEQERLQAECGVR) are interaction with CDC5L. Residues 418-448 (LAAQVAAEVQFVRDLVRALEQERLQAECGVR) are required for interaction with ATF4 but not with PAWR. A leucine-zipper region spans residues 422-436 (VAAEVQFVRDLVRAL).

The protein belongs to the protein kinase superfamily. CAMK Ser/Thr protein kinase family. DAP kinase subfamily. In terms of assembly, homooligomer in its kinase-active form (homotrimers and homodimers are reported); monomeric in its kinase-inactive form. Homodimerization is required for activation segment autophosphorylation. Interacts with DAXX, ATF4, NLK, TCF7L2, UBE2D1, UBE2D2, UBE2D3 and CDC5L. Interacts with PAWR; also demonstrated in aorta smooth muscle cells indicative for the cytoskeletal targeting function of PAWR. Interacts with AR; enhanced by AATF. Interacts with LUZP1; the interaction is likely to occur throughout the cell cycle and reduces the LUZP1-mediated suppression of MYL9 phosphorylation. It depends on Mg(2+) as a cofactor. In terms of processing, ubiquitinated. Ubiquitination mediated by the UBE2D3 E3 ligase does not lead to proteasomal degradation, but influences promyelocytic leukemia protein nuclear bodies (PML-NBs) formation in the nucleus. The phosphorylation status is critical for kinase activity, oligomerization and intracellular localization. Phosphorylation at Thr-180, Thr-225 and Thr-265 is essential for activity. The phosphorylated form is localized in the cytoplasm and nuclear translocation or retention is maximal when it is not phosphorylated. Phosphorylation increases the trimeric form, and its dephosphorylation favors a kinase-inactive monomeric form. As to expression, ubiquitously expressed in all tissue types examined. High levels in brain, heart, lung and spleen, lower expression in kidney, liver, skeletal muscle and testis. Isoform 2 is expressed in the smooth muscle.

Its subcellular location is the nucleus. The protein localises to the PML body. The protein resides in the cytoplasm. It localises to the cytoskeleton. It is found in the microtubule organizing center. Its subcellular location is the chromosome. The protein localises to the centromere. The protein resides in the spindle. It localises to the midbody. It catalyses the reaction L-seryl-[protein] + ATP = O-phospho-L-seryl-[protein] + ADP + H(+). It carries out the reaction L-threonyl-[protein] + ATP = O-phospho-L-threonyl-[protein] + ADP + H(+). With respect to regulation, a sequential activation is proposed: autophosphorylation at consensus sites is leading to dimerization of the catalytic domain and activation segment exchange (producing an active confirmation of both kinase modules in trans) followed by phosphorylation at Thr-180 in the activation segment and at other regulatory sites. Phosphorylation at Thr-180, Thr-225 and Thr-265 is essential for activity. Inhibited by pyridone 6 (K00225), a potent, ATP-competitive inhibitor. Phosphorylation at Thr-180, Thr-225 and Thr-265 is essential for activity. In terms of biological role, serine/threonine kinase which is involved in the regulation of apoptosis, autophagy, transcription, translation and actin cytoskeleton reorganization. Regulates both type I (caspase-dependent) apoptotic and type II (caspase-independent) autophagic cell deaths signal, depending on the cellular setting. Involved in formation of promyelocytic leukemia protein nuclear body (PML-NB). Involved in apoptosis involving PAWR which mediates cytoplasmic relocation; in vitro phosphorylates PAWR. Regulates myosin phosphorylation in both smooth muscle and non-muscle cells. In smooth muscle, regulates myosin either directly by phosphorylating MYL12B and MYL9 or through inhibition of smooth muscle myosin phosphatase (SMPP1M) via phosphorylation of PPP1R12A; the inhibition of SMPP1M functions to enhance muscle responsiveness to Ca(2+) and promote a contractile state. Phosphorylates MYL12B in non-muscle cells leading to reorganization of actin cytoskeleton such as in regulation of cell polarity and cell migration. Positively regulates canonical Wnt/beta-catenin signaling through interaction with NLK and TCF7L2; disrupts the NLK-TCF7L2 complex thereby influencing the phosphorylation of TCF7L2 by NLK. Phosphorylates RPL13A on 'Ser-77' upon interferon-gamma activation which is causing RPL13A release from the ribosome, RPL13A association with the GAIT complex and its subsequent involvement in transcript-selective translation inhibition. Phosphorylates STAT3 and enhances its transcriptional activity. Enhances transcription from AR-responsive promoters in a hormone- and kinase-dependent manner. Phosphorylates histone H3 on 'Thr-11' at centromeres during mitosis. This Rattus norvegicus (Rat) protein is Death-associated protein kinase 3 (Dapk3).